We begin with the raw amino-acid sequence, 218 residues long: MRVKAKIFIRPLFATYVSVIDLSLWEPRTELGRMVKEGKIRTIDEIFANNYIIKEPEIVDILLPGLKQELLNVNLVQRQTHAGERNQFQAVVAVGNEDGYVGVGIGKARQVRQAIEKATREAKLNLVPVRRGCGSWKCSCDEPHSVPFVVRGKSGSVEITLIPAPKGVGLVAGDVAKAVLRLAGIKDVWTKTRGDTRTTLNFAMAVYNALRNTYYFKI.

The S5 DRBM domain maps to 66–129; the sequence is LKQELLNVNL…REAKLNLVPV (64 aa).

This sequence belongs to the universal ribosomal protein uS5 family. Part of the 30S ribosomal subunit. Contacts protein S4.

In terms of biological role, with S4 and S12 plays an important role in translational accuracy. This Pyrobaculum aerophilum (strain ATCC 51768 / DSM 7523 / JCM 9630 / CIP 104966 / NBRC 100827 / IM2) protein is Small ribosomal subunit protein uS5.